Here is a 297-residue protein sequence, read N- to C-terminus: Transcription factor LRL3 (297 aa).

A disordered region spans residues 59 to 109 (PDQFHHPQESGGPTMGSQEGLQPQGTVSTTSAPVVRQKPRVRARRGQATDP). The span at 73 to 90 (MGSQEGLQPQGTVSTTSA) shows a compositional bias: polar residues. The basic motif; degenerate stretch occupies residues 105–118 (QATDPHSIAERLRR). Positions 105–154 (QATDPHSIAERLRRERIAERMKSLQELVPNTNKTDKASMLDEIIEYVRFL) constitute a bHLH domain. Residues 119–154 (ERIAERMKSLQELVPNTNKTDKASMLDEIIEYVRFL) are helix-loop-helix motif.

As to quaternary structure, homodimer. Expressed in trichomes of the root maturation zone. Detected constitutively in flowers.

The protein localises to the nucleus. Its function is as follows. Transcription factor that regulates the development of root hairs. Does not seem to be involved in the regulation of sperm cell development. The sequence is that of Transcription factor LRL3 from Arabidopsis thaliana (Mouse-ear cress).